The following is an 86-amino-acid chain: Large ribosomal subunit protein eL43 (86 aa).

Zn(2+)-binding residues include cysteine 38, cysteine 41, cysteine 57, and cysteine 60. The C4-type zinc-finger motif lies at 38 to 60; that stretch reads CPFCGSTGTVRRVSVGVWSCRKC.

This sequence belongs to the eukaryotic ribosomal protein eL43 family. Putative zinc-binding subfamily. In terms of assembly, part of the 50S ribosomal subunit. Zn(2+) is required as a cofactor.

Functionally, binds to the 23S rRNA. The chain is Large ribosomal subunit protein eL43 from Aeropyrum pernix (strain ATCC 700893 / DSM 11879 / JCM 9820 / NBRC 100138 / K1).